The primary structure comprises 98 residues: Large ribosomal subunit protein uL23 (98 aa).

Belongs to the universal ribosomal protein uL23 family. As to quaternary structure, part of the 50S ribosomal subunit. Contacts protein L29, and trigger factor when it is bound to the ribosome.

In terms of biological role, one of the early assembly proteins it binds 23S rRNA. One of the proteins that surrounds the polypeptide exit tunnel on the outside of the ribosome. Forms the main docking site for trigger factor binding to the ribosome. The polypeptide is Large ribosomal subunit protein uL23 (Streptococcus gordonii (strain Challis / ATCC 35105 / BCRC 15272 / CH1 / DL1 / V288)).